The following is a 394-amino-acid chain: Elongation factor Tu (394 aa).

A tr-type G domain is found at 10-204; sequence RTHINVGTIG…ILDNYIPEPK (195 aa). The segment at 19–26 is G1; that stretch reads GHVDHGKT. 19-26 is a binding site for GTP; the sequence is GHVDHGKT. Residue Thr-26 participates in Mg(2+) binding. The segment at 60–64 is G2; that stretch reads GITIN. The segment at 81 to 84 is G3; the sequence is DCPG. GTP-binding positions include 81–85 and 136–139; these read DCPGH and NKCD. Residues 136–139 are G4; it reads NKCD. A G5 region spans residues 174–176; it reads SAL.

It belongs to the TRAFAC class translation factor GTPase superfamily. Classic translation factor GTPase family. EF-Tu/EF-1A subfamily. Monomer.

It localises to the cytoplasm. The catalysed reaction is GTP + H2O = GDP + phosphate + H(+). Functionally, GTP hydrolase that promotes the GTP-dependent binding of aminoacyl-tRNA to the A-site of ribosomes during protein biosynthesis. The chain is Elongation factor Tu from Blochmanniella floridana.